The chain runs to 176 residues: Prion-like protein doppel (176 aa).

The first 25 residues, 1 to 25, serve as a signal peptide directing secretion; sequence MRKHLSWWWLATVCMLLFSHLSAVQ. The interval 27–50 is flexible tail; sequence RGIKHRIKWNRKALPSTAQITEAQ. O-linked (GalNAc...) threonine glycosylation is present at T43. Residues 51–152 are globular; that stretch reads VAENRPGAFI…KHCEFWLERG (102 aa). Disulfide bonds link C94–C145 and C108–C140. N98 and N110 each carry an N-linked (GlcNAc...) asparagine glycan. The cu(2+) binding stretch occupies residues 122–139; that stretch reads KPDNKLHQQVLWRLVQEL. G152 is lipidated: GPI-anchor amidated glycine. A propeptide spans 153 to 176 (removed in mature form); it reads AGLRVTMHQPVLLCLLALIWLTVK.

It belongs to the prion family. Post-translationally, N-glycosylated. N-glycosylated at two distinct sites. O-glycosylated. In terms of tissue distribution, expressed in testis, in Sertoli cells, ejaculated spermatozoa and in seminal fluid (at protein level).

Its subcellular location is the cell membrane. Required for normal acrosome reaction and for normal male fertility. Can bind Cu(2+). This chain is Prion-like protein doppel (PRND), found in Homo sapiens (Human).